The chain runs to 269 residues: Putative pyruvate, phosphate dikinase regulatory protein (269 aa).

Residue 153–160 (GVSRTSKT) coordinates ADP.

This sequence belongs to the pyruvate, phosphate/water dikinase regulatory protein family. PDRP subfamily.

It carries out the reaction N(tele)-phospho-L-histidyl/L-threonyl-[pyruvate, phosphate dikinase] + ADP = N(tele)-phospho-L-histidyl/O-phospho-L-threonyl-[pyruvate, phosphate dikinase] + AMP + H(+). It catalyses the reaction N(tele)-phospho-L-histidyl/O-phospho-L-threonyl-[pyruvate, phosphate dikinase] + phosphate + H(+) = N(tele)-phospho-L-histidyl/L-threonyl-[pyruvate, phosphate dikinase] + diphosphate. Its function is as follows. Bifunctional serine/threonine kinase and phosphorylase involved in the regulation of the pyruvate, phosphate dikinase (PPDK) by catalyzing its phosphorylation/dephosphorylation. The chain is Putative pyruvate, phosphate dikinase regulatory protein from Pediococcus pentosaceus (strain ATCC 25745 / CCUG 21536 / LMG 10740 / 183-1w).